The chain runs to 605 residues: LysM domain receptor-like kinase 10 (605 aa).

The signal sequence occupies residues 1 to 20; sequence MFSLPALLIGACAFAAAAVA. Residues 21–245 are Extracellular-facing; that stretch reads ASGDGCRAGC…GMGNSLSGGA (225 aa). 3 disulfides stabilise this stretch: Cys26/Cys89, Cys30/Cys161, and Cys87/Cys159. An N-linked (GlcNAc...) asparagine glycan is attached at Asn44. Residues 115-121 and 142-148 each bind chitin; these read GGDTYDA and PPGRIPG. N-linked (GlcNAc...) asparagine glycans are attached at residues Asn154 and Asn158. In terms of domain architecture, LysM spans 174–221; that stretch reads LTYPLWDGETLESVAAQYGFSSPAEMELIRRYNPGMGGVSGKGIVFIP. Residue Asn226 is glycosylated (N-linked (GlcNAc...) asparagine). Residues 246–266 traverse the membrane as a helical segment; it reads IAGIVIACIAIFIVAIWLIIM. At 267 to 605 the chain is on the cytoplasmic side; the sequence is FYRWQKFRKA…DLRDMDYHPF (339 aa). Ser278 carries the post-translational modification Phosphoserine. In terms of domain architecture, Protein kinase spans 317–591; sequence FSMEHKIGQG…RSVVVALMAL (275 aa). ATP-binding positions include 323-331 and Lys344; that span reads IGQGGFGSV. The Proton acceptor role is filled by Asp436.

The protein belongs to the protein kinase superfamily. Ser/Thr protein kinase family.

The protein resides in the cell membrane. The catalysed reaction is L-seryl-[protein] + ATP = O-phospho-L-seryl-[protein] + ADP + H(+). It carries out the reaction L-threonyl-[protein] + ATP = O-phospho-L-threonyl-[protein] + ADP + H(+). This chain is LysM domain receptor-like kinase 10, found in Oryza sativa subsp. japonica (Rice).